Reading from the N-terminus, the 1342-residue chain is DNA-directed RNA polymerase subunit beta (1342 aa).

This sequence belongs to the RNA polymerase beta chain family. The RNAP catalytic core consists of 2 alpha, 1 beta, 1 beta' and 1 omega subunit. When a sigma factor is associated with the core the holoenzyme is formed, which can initiate transcription.

It carries out the reaction RNA(n) + a ribonucleoside 5'-triphosphate = RNA(n+1) + diphosphate. DNA-dependent RNA polymerase catalyzes the transcription of DNA into RNA using the four ribonucleoside triphosphates as substrates. The chain is DNA-directed RNA polymerase subunit beta from Salmonella gallinarum (strain 287/91 / NCTC 13346).